Here is a 133-residue protein sequence, read N- to C-terminus: Interleukin-4 (133 aa).

Positions 1–24 are cleaved as a signal peptide; the sequence is MGLTSQLIPTLVCLLACTSNFVHG. Cystine bridges form between Cys-27/Cys-133, Cys-48/Cys-85, and Cys-70/Cys-105. N-linked (GlcNAc...) asparagine glycosylation is present at Asn-62.

Belongs to the IL-4/IL-13 family.

It localises to the secreted. In terms of biological role, participates in at least several B-cell activation processes as well as of other cell types. It is a costimulator of DNA-synthesis. It induces the expression of class II MHC molecules on resting B-cells. It enhances both secretion and cell surface expression of IgE and IgG1. It also regulates the expression of the low affinity Fc receptor for IgE (CD23) on both lymphocytes and monocytes. Positively regulates IL31RA expression in macrophages. Stimulates autophagy in dendritic cells by interfering with mTORC1 signaling and through the induction of RUFY4. This is Interleukin-4 (IL4) from Sus scrofa (Pig).